Here is a 275-residue protein sequence, read N- to C-terminus: Phosphonoacetaldehyde hydrolase (275 aa).

D15 serves as the catalytic Nucleophile. 2 residues coordinate Mg(2+): D15 and A17. The active-site Schiff-base intermediate with substrate is K56. D189 lines the Mg(2+) pocket.

The protein belongs to the HAD-like hydrolase superfamily. PhnX family. Homodimer. It depends on Mg(2+) as a cofactor.

It carries out the reaction phosphonoacetaldehyde + H2O = acetaldehyde + phosphate + H(+). Its function is as follows. Involved in phosphonate degradation. In Pseudomonas aeruginosa (strain UCBPP-PA14), this protein is Phosphonoacetaldehyde hydrolase.